The following is a 230-amino-acid chain: Large ribosomal subunit protein uL1 (230 aa).

It belongs to the universal ribosomal protein uL1 family. Part of the 50S ribosomal subunit.

Functionally, binds directly to 23S rRNA. The L1 stalk is quite mobile in the ribosome, and is involved in E site tRNA release. In terms of biological role, protein L1 is also a translational repressor protein, it controls the translation of the L11 operon by binding to its mRNA. In Gluconobacter oxydans (strain 621H) (Gluconobacter suboxydans), this protein is Large ribosomal subunit protein uL1.